Here is a 162-residue protein sequence, read N- to C-terminus: Anaerobic nitrite reductase GLB1 (162 aa).

Positions valine 9–lysine 159 constitute a Globin domain. Positions glutamate 42 to serine 46 match the Homodimerization motif. Heme b contacts are provided by lysine 66, histidine 70, arginine 100, threonine 104, and histidine 105. The short motif at aspartate 112–glutamate 124 is the Homodimerization element.

Belongs to the plant globin family. In terms of assembly, homodimer. Requires heme b as cofactor. Seeds and roots.

It is found in the cytoplasm. The protein localises to the nucleus. It carries out the reaction Fe(III)-heme b-[protein] + nitric oxide + H2O = Fe(II)-heme b-[protein] + nitrite + 2 H(+). Functionally, phytoglobin that reduces nitrite to nitric oxide (NO) under anoxic conditions (e.g. during flooding or in waterlogged soil). May not function as an oxygen storage or transport protein. Has an unusually high affinity for O(2) through an hexacoordinate heme iron because of a very low dissociation constant. In Hordeum vulgare (Barley), this protein is Anaerobic nitrite reductase GLB1.